A 62-amino-acid chain; its full sequence is Large ribosomal subunit protein bL33 (62 aa).

Belongs to the bacterial ribosomal protein bL33 family.

This Acaryochloris marina (strain MBIC 11017) protein is Large ribosomal subunit protein bL33.